An 86-amino-acid chain; its full sequence is Toxin CngtIV (86 aa).

The first 19 residues, 1–19, serve as a signal peptide directing secretion; it reads MNSLLIITACLVLIGTVWA. The region spanning 20-84 is the LCN-type CS-alpha/beta domain; sequence KDGYLVDVKG…TWPLPNKRCG (65 aa). 4 disulfides stabilise this stretch: Cys30–Cys83, Cys34–Cys59, Cys43–Cys64, and Cys47–Cys66.

This sequence belongs to the long (4 C-C) scorpion toxin superfamily. Sodium channel inhibitor family. Beta subfamily. Expressed by the venom gland.

It localises to the secreted. Its function is as follows. Beta toxins bind voltage-independently at site-4 of sodium channels (Nav) and shift the voltage of activation toward more negative potentials thereby affecting sodium channel activation and promoting spontaneous and repetitive firing. The protein is Toxin CngtIV of Centruroides noxius (Mexican scorpion).